The primary structure comprises 402 residues: Prophage integrase IntZ (402 aa).

Residues 103–183 (AGFKKVAEDW…RIGEIFKFAV (81 aa)) form the Core-binding (CB) domain. Residues 206 to 381 (GHNAWIPISE…AYLKQRRAMM (176 aa)) form the Tyr recombinase domain. Residues Arg244, Lys271, His332, Arg335, and His359 contribute to the active site. Catalysis depends on Tyr368, which acts as the O-(3'-phospho-DNA)-tyrosine intermediate.

It belongs to the 'phage' integrase family.

In terms of biological role, integrase is necessary for integration of the phage into the host genome by site-specific recombination. In conjunction with excisionase, integrase is also necessary for excision of the prophage from the host genome. In Escherichia coli (strain K12), this protein is Prophage integrase IntZ (intZ).